The sequence spans 232 residues: MAKISKRRQAFAAKVDRQKLYAIEDALALVKECASAKFDESIDVAVQLGIDAKKSDQVVRGSVVLPAGTGKSVRVAVFAQGEKAEQARAAGAEIVGMEDLAEQIKAGQMDFDIVIASPDTMRIVGTLGQILGPRGLMPNPKVGTVTPDVATAVKNAKAGQVQFRVDKAGIIHATIGRASFEAAALRSNLSALIEALQKAKPATSKGVYLRKVALSSTMGVGLRVDQATLAAQ.

It belongs to the universal ribosomal protein uL1 family. In terms of assembly, part of the 50S ribosomal subunit.

In terms of biological role, binds directly to 23S rRNA. The L1 stalk is quite mobile in the ribosome, and is involved in E site tRNA release. Protein L1 is also a translational repressor protein, it controls the translation of the L11 operon by binding to its mRNA. In Burkholderia ambifaria (strain MC40-6), this protein is Large ribosomal subunit protein uL1.